The chain runs to 349 residues: Holliday junction branch migration complex subunit RuvB (349 aa).

The large ATPase domain (RuvB-L) stretch occupies residues 1-185 (MSQEKERLIS…FGSIFRLDFY (185 aa)). Residues Leu-24, Arg-25, Gly-66, Lys-69, Thr-70, Thr-71, 132 to 134 (EDY), Arg-175, Tyr-185, and Arg-222 contribute to the ATP site. Residue Thr-70 participates in Mg(2+) binding. A small ATPAse domain (RuvB-S) region spans residues 186–256 (DEEAIHDIVR…IAAESLACLE (71 aa)). Positions 259–349 (KLGLDEIDHK…QQGLWTENGS (91 aa)) are head domain (RuvB-H). The DNA site is built by Arg-314 and Arg-319.

This sequence belongs to the RuvB family. As to quaternary structure, homohexamer. Forms an RuvA(8)-RuvB(12)-Holliday junction (HJ) complex. HJ DNA is sandwiched between 2 RuvA tetramers; dsDNA enters through RuvA and exits via RuvB. An RuvB hexamer assembles on each DNA strand where it exits the tetramer. Each RuvB hexamer is contacted by two RuvA subunits (via domain III) on 2 adjacent RuvB subunits; this complex drives branch migration. In the full resolvosome a probable DNA-RuvA(4)-RuvB(12)-RuvC(2) complex forms which resolves the HJ.

The protein resides in the cytoplasm. It carries out the reaction ATP + H2O = ADP + phosphate + H(+). Its function is as follows. The RuvA-RuvB-RuvC complex processes Holliday junction (HJ) DNA during genetic recombination and DNA repair, while the RuvA-RuvB complex plays an important role in the rescue of blocked DNA replication forks via replication fork reversal (RFR). RuvA specifically binds to HJ cruciform DNA, conferring on it an open structure. The RuvB hexamer acts as an ATP-dependent pump, pulling dsDNA into and through the RuvAB complex. RuvB forms 2 homohexamers on either side of HJ DNA bound by 1 or 2 RuvA tetramers; 4 subunits per hexamer contact DNA at a time. Coordinated motions by a converter formed by DNA-disengaged RuvB subunits stimulates ATP hydrolysis and nucleotide exchange. Immobilization of the converter enables RuvB to convert the ATP-contained energy into a lever motion, pulling 2 nucleotides of DNA out of the RuvA tetramer per ATP hydrolyzed, thus driving DNA branch migration. The RuvB motors rotate together with the DNA substrate, which together with the progressing nucleotide cycle form the mechanistic basis for DNA recombination by continuous HJ branch migration. Branch migration allows RuvC to scan DNA until it finds its consensus sequence, where it cleaves and resolves cruciform DNA. This is Holliday junction branch migration complex subunit RuvB from Dehalococcoides mccartyi (strain CBDB1).